Consider the following 268-residue polypeptide: Casein kinase II subunit beta (268 aa).

Positions 222 to 268 (LSNNNQNNQNNNINNNNNNNNNNNNNNNNNNNNQQNNNNQQNNNTNK) are disordered. Positions 224–268 (NNNQNNQNNNINNNNNNNNNNNNNNNNNNNNQQNNNNQQNNNTNK) are enriched in low complexity.

The protein belongs to the casein kinase 2 subunit beta family. In terms of assembly, casein kinase II/CK2 is a tetramer composed of two alpha subunit and two beta subunits.

Functionally, regulatory subunit of casein kinase II/CK2. As part of the kinase complex regulates the basal catalytic activity of the alpha subunit a constitutively active serine/threonine-protein kinase that phosphorylates a large number of substrates containing acidic residues C-terminal to the phosphorylated serine or threonine. The protein is Casein kinase II subunit beta (csnk2b) of Dictyostelium discoideum (Social amoeba).